The chain runs to 328 residues: Beta-ribofuranosylphenol 5'-phosphate synthase (328 aa).

Belongs to the beta-RFA-P synthase family. Homodimer. Requires Mg(2+) as cofactor.

It carries out the reaction 5-phospho-alpha-D-ribose 1-diphosphate + 4-hydroxybenzoate + H(+) = 4-(beta-D-ribofuranosyl)phenol 5'-phosphate + CO2 + diphosphate. It catalyses the reaction 4-aminobenzoate + 5-phospho-alpha-D-ribose 1-diphosphate + H(+) = 4-(beta-D-ribofuranosyl)aminobenzene 5'-phosphate + CO2 + diphosphate. It participates in cofactor biosynthesis; 5,6,7,8-tetrahydromethanopterin biosynthesis. Its function is as follows. Catalyzes the condensation of 4-hydroxybenzoate (HB) with 5-phospho-alpha-D-ribose 1-diphosphate (PRPP) to produce beta-ribofuranosylphenol 5'-phosphate (beta-RFH-P). Also catalyzes the condensation of 4-aminobenzoate (pABA) with PRPP to produce beta-ribofuranosylaminobenzene 5'-phosphate (beta-RFA-P). Only 4-hydroxybenzoate is known to be biosynthesized by methanogenic archaea, but 4-aminobenzoate can be used as substrate by growing methanogens when it is present in the growth medium. In Methanocaldococcus jannaschii (strain ATCC 43067 / DSM 2661 / JAL-1 / JCM 10045 / NBRC 100440) (Methanococcus jannaschii), this protein is Beta-ribofuranosylphenol 5'-phosphate synthase.